The primary structure comprises 311 residues: Aspartate carbamoyltransferase catalytic subunit (311 aa).

Carbamoyl phosphate is bound by residues arginine 55 and threonine 56. Lysine 85 contacts L-aspartate. Carbamoyl phosphate-binding residues include arginine 106, histidine 135, and glutamine 138. L-aspartate is bound by residues arginine 168 and arginine 230. Positions 268 and 269 each coordinate carbamoyl phosphate.

The protein belongs to the aspartate/ornithine carbamoyltransferase superfamily. ATCase family. Heterododecamer (2C3:3R2) of six catalytic PyrB chains organized as two trimers (C3), and six regulatory PyrI chains organized as three dimers (R2).

The catalysed reaction is carbamoyl phosphate + L-aspartate = N-carbamoyl-L-aspartate + phosphate + H(+). Its pathway is pyrimidine metabolism; UMP biosynthesis via de novo pathway; (S)-dihydroorotate from bicarbonate: step 2/3. In terms of biological role, catalyzes the condensation of carbamoyl phosphate and aspartate to form carbamoyl aspartate and inorganic phosphate, the committed step in the de novo pyrimidine nucleotide biosynthesis pathway. The protein is Aspartate carbamoyltransferase catalytic subunit of Proteus mirabilis (strain HI4320).